Here is a 201-residue protein sequence, read N- to C-terminus: 3-isopropylmalate dehydratase small subunit (201 aa).

Belongs to the LeuD family. LeuD type 1 subfamily. In terms of assembly, heterodimer of LeuC and LeuD.

The enzyme catalyses (2R,3S)-3-isopropylmalate = (2S)-2-isopropylmalate. The protein operates within amino-acid biosynthesis; L-leucine biosynthesis; L-leucine from 3-methyl-2-oxobutanoate: step 2/4. Its function is as follows. Catalyzes the isomerization between 2-isopropylmalate and 3-isopropylmalate, via the formation of 2-isopropylmaleate. This is 3-isopropylmalate dehydratase small subunit from Shewanella frigidimarina (strain NCIMB 400).